Reading from the N-terminus, the 310-residue chain is MEKVLAIVGPTAVGKTNLSIDIAKKFNGEIISGDSMQVYQKLDIGTAKVTIEEMQGIPHHLIDTKTIHDRFSAADFKETAQKLISEISQRGKLPIVVGGTGFYLQALLRDLELGGSNEDRNQIEAIRTELNQKENDELLSILKTIDLATYENIDRKNRRRIIRAIEVFKVSGQKMSEQQMQPTAVYDDLLIGLNTERSILYQRINHRVNMMLDAGLENEARWLFDETKVPQANKGIGYREWQDYFKNEKTLSETIELIQKDSRHYAKRQLTWFRNKMDVNWYDIIQNPQEQAKIYQKIENWLGVKNELER.

ATP is bound at residue 9 to 16; it reads GPTAVGKT. 11–16 contacts substrate; sequence TAVGKT. Positions 34–37 are interaction with substrate tRNA; it reads DSMQ.

This sequence belongs to the IPP transferase family. Monomer. Requires Mg(2+) as cofactor.

The catalysed reaction is adenosine(37) in tRNA + dimethylallyl diphosphate = N(6)-dimethylallyladenosine(37) in tRNA + diphosphate. Catalyzes the transfer of a dimethylallyl group onto the adenine at position 37 in tRNAs that read codons beginning with uridine, leading to the formation of N6-(dimethylallyl)adenosine (i(6)A). The sequence is that of tRNA dimethylallyltransferase from Pediococcus pentosaceus (strain ATCC 25745 / CCUG 21536 / LMG 10740 / 183-1w).